The chain runs to 330 residues: MALPVYYDKDIDLGVIQSLQVGIIGYGAQGEAQALNLRDSKVKVRIGLYQGSLSVSKAKKEGFEVLGVKELVQQSDVIMALLPDELHKEVLEKEVIPFLKEGQIVGFAHGFSVHFNQVVLPKGVGAILVAPKGPGSALREEYLKNRGLYHLIAIEQESSKNNAKAVALSYAKAMGGGRMGVLKTSFKEECESDLFGEQAVLCGGLEAIVRMGFETLIKAGYPEELAYFECVHEVKLVADLLHYKGVEGLRKHISNTAEFGAIKAREPMGNLLEKRMQKILKKIQNGSFAKDFLLEKSLNYPRLNTERKALKETKIEQIGEILRAPFNHKK.

The region spanning Leu3–Thr184 is the KARI N-terminal Rossmann domain. NADP(+) is bound by residues Tyr26–Gln29, Ser52, and Ser54. His109 is a catalytic residue. Gly135 is a binding site for NADP(+). One can recognise a KARI C-terminal knotted domain in the interval Ser185–Lys329. 4 residues coordinate Mg(2+): Asp193, Glu197, Glu229, and Glu233. Residue Ser254 participates in substrate binding.

This sequence belongs to the ketol-acid reductoisomerase family. Mg(2+) is required as a cofactor.

It carries out the reaction (2R)-2,3-dihydroxy-3-methylbutanoate + NADP(+) = (2S)-2-acetolactate + NADPH + H(+). The enzyme catalyses (2R,3R)-2,3-dihydroxy-3-methylpentanoate + NADP(+) = (S)-2-ethyl-2-hydroxy-3-oxobutanoate + NADPH + H(+). Its pathway is amino-acid biosynthesis; L-isoleucine biosynthesis; L-isoleucine from 2-oxobutanoate: step 2/4. The protein operates within amino-acid biosynthesis; L-valine biosynthesis; L-valine from pyruvate: step 2/4. Its function is as follows. Involved in the biosynthesis of branched-chain amino acids (BCAA). Catalyzes an alkyl-migration followed by a ketol-acid reduction of (S)-2-acetolactate (S2AL) to yield (R)-2,3-dihydroxy-isovalerate. In the isomerase reaction, S2AL is rearranged via a Mg-dependent methyl migration to produce 3-hydroxy-3-methyl-2-ketobutyrate (HMKB). In the reductase reaction, this 2-ketoacid undergoes a metal-dependent reduction by NADPH to yield (R)-2,3-dihydroxy-isovalerate. This is Ketol-acid reductoisomerase (NADP(+)) from Helicobacter pylori (strain HPAG1).